The sequence spans 118 residues: Large ribosomal subunit protein uL24 (118 aa).

The protein belongs to the universal ribosomal protein uL24 family. Part of the 50S ribosomal subunit.

One of two assembly initiator proteins, it binds directly to the 5'-end of the 23S rRNA, where it nucleates assembly of the 50S subunit. Its function is as follows. One of the proteins that surrounds the polypeptide exit tunnel on the outside of the subunit. This chain is Large ribosomal subunit protein uL24, found in Synechococcus sp. (strain WH7803).